A 1279-amino-acid polypeptide reads, in one-letter code: ATP-dependent helicase/nuclease subunit A (1279 aa).

The UvrD-like helicase ATP-binding domain occupies 4 to 499; it reads TKWTDEQRQA…VKLFKNFRSR (496 aa). Residue 25 to 32 participates in ATP binding; sequence AGAGAGKT. Positions 526–853 constitute a UvrD-like helicase C-terminal domain; the sequence is EEALKVGASY…RIMSIHKSKG (328 aa).

It belongs to the helicase family. AddA subfamily. As to quaternary structure, heterodimer of AddA and AddB/RexB. It depends on Mg(2+) as a cofactor.

It carries out the reaction Couples ATP hydrolysis with the unwinding of duplex DNA by translocating in the 3'-5' direction.. The catalysed reaction is ATP + H2O = ADP + phosphate + H(+). In terms of biological role, the heterodimer acts as both an ATP-dependent DNA helicase and an ATP-dependent, dual-direction single-stranded exonuclease. Recognizes the chi site generating a DNA molecule suitable for the initiation of homologous recombination. The AddA nuclease domain is required for chi fragment generation; this subunit has the helicase and 3' -&gt; 5' nuclease activities. The polypeptide is ATP-dependent helicase/nuclease subunit A (Clostridium botulinum (strain ATCC 19397 / Type A)).